Here is a 169-residue protein sequence, read N- to C-terminus: MQNTIRIVGIDPGLRRTGWGIIDTLGNSLRFVASGTVTSDGDMDLASRLCQLHDGLAEVVHAYKPDEAAVEQTFVNKDAVATLKLGQARGIAMLVPARAGLHVSEYAPNAVKKAVIGVGHGEKHQIHMMLKILMPKVEFKGDDAADALAIAICHAHNRGSNRMRQALAG.

Residues D11, E71, and D143 contribute to the active site. 3 residues coordinate Mg(2+): D11, E71, and D143.

This sequence belongs to the RuvC family. In terms of assembly, homodimer which binds Holliday junction (HJ) DNA. The HJ becomes 2-fold symmetrical on binding to RuvC with unstacked arms; it has a different conformation from HJ DNA in complex with RuvA. In the full resolvosome a probable DNA-RuvA(4)-RuvB(12)-RuvC(2) complex forms which resolves the HJ. It depends on Mg(2+) as a cofactor.

The protein localises to the cytoplasm. It catalyses the reaction Endonucleolytic cleavage at a junction such as a reciprocal single-stranded crossover between two homologous DNA duplexes (Holliday junction).. Functionally, the RuvA-RuvB-RuvC complex processes Holliday junction (HJ) DNA during genetic recombination and DNA repair. Endonuclease that resolves HJ intermediates. Cleaves cruciform DNA by making single-stranded nicks across the HJ at symmetrical positions within the homologous arms, yielding a 5'-phosphate and a 3'-hydroxyl group; requires a central core of homology in the junction. The consensus cleavage sequence is 5'-(A/T)TT(C/G)-3'. Cleavage occurs on the 3'-side of the TT dinucleotide at the point of strand exchange. HJ branch migration catalyzed by RuvA-RuvB allows RuvC to scan DNA until it finds its consensus sequence, where it cleaves and resolves the cruciform DNA. The sequence is that of Crossover junction endodeoxyribonuclease RuvC from Rhizobium etli (strain CIAT 652).